The following is a 277-amino-acid chain: Undecaprenyl-diphosphatase (277 aa).

A run of 8 helical transmembrane segments spans residues 11–31 (WWQA…PISS), 47–67 (AGAS…LIYF), 96–116 (VGIL…KAIW), 123–143 (LWVI…AEQT), 153–173 (LGIW…IPGV), 197–217 (SFLL…ISEF), 227–247 (LGTL…IQFL), and 254–274 (LFIV…ALGF).

The protein belongs to the UppP family.

It localises to the cell inner membrane. The enzyme catalyses di-trans,octa-cis-undecaprenyl diphosphate + H2O = di-trans,octa-cis-undecaprenyl phosphate + phosphate + H(+). Functionally, catalyzes the dephosphorylation of undecaprenyl diphosphate (UPP). Confers resistance to bacitracin. This chain is Undecaprenyl-diphosphatase, found in Synechococcus sp. (strain JA-2-3B'a(2-13)) (Cyanobacteria bacterium Yellowstone B-Prime).